Here is a 207-residue protein sequence, read N- to C-terminus: MERKERLRAGIAAMGPDISETAQDRLLAYVDLLKKWNKTYNLTALRDEEKMIVHHLLDSLTLLPYIEGAQTMLDVGSGGGQPGIPAAVCRPDVQITLLDANTKKTAFLRQAAIELGLDNVRVVSGRVEAVSDVRADVVTSRAFAELADFVSWTAHLLKDGGYWAAMKGVYPQGEIGRLPQDVCVEKVQRLDVPGLDAERHIVILSKR.

Residues glycine 76, glutamine 81, 127 to 128, and arginine 141 each bind S-adenosyl-L-methionine; that span reads VE.

This sequence belongs to the methyltransferase superfamily. RNA methyltransferase RsmG family.

The protein localises to the cytoplasm. The catalysed reaction is guanosine(527) in 16S rRNA + S-adenosyl-L-methionine = N(7)-methylguanosine(527) in 16S rRNA + S-adenosyl-L-homocysteine. Functionally, specifically methylates the N7 position of guanine in position 527 of 16S rRNA. The sequence is that of Ribosomal RNA small subunit methyltransferase G from Neisseria gonorrhoeae (strain ATCC 700825 / FA 1090).